Here is a 149-residue protein sequence, read N- to C-terminus: Aquaporin-like protein 2 (149 aa).

A disordered region spans residues 1-35 (MSNESNDLEKNISHLDPTGVDNAYIPPEQPETKHS). At 1–47 (MSNESNDLEKNISHLDPTGVDNAYIPPEQPETKHSRFNIDRGTLRNH) the chain is on the cytoplasmic side. A helical transmembrane segment spans residues 48–68 (FIAAVGEFCGTFMFLWCAYVI). The Extracellular portion of the chain corresponds to 69-89 (CNVANHDVALTTEPEGSHPGQ). A helical transmembrane segment spans residues 90 to 110 (LIMIALGFGFSVMFSIWCFWW). Residues 111-149 (GFEPSRFSLFVFGQSHLTSQMCSDVVSSDHCWDGCWWCR) lie on the Cytoplasmic side of the membrane.

This sequence belongs to the MIP/aquaporin (TC 1.A.8) family.

It localises to the endoplasmic reticulum membrane. The protein localises to the cell membrane. Functionally, water channel required to facilitate the transport of water across membranes. Involved in freeze tolerance, osmotolerance and cell flocculation in liquid cultures. Is non-functional in most laboratory strains. This chain is Aquaporin-like protein 2 (AQY2-2), found in Saccharomyces cerevisiae (strain Lalvin EC1118 / Prise de mousse) (Baker's yeast).